Consider the following 102-residue polypeptide: Large ribosomal subunit protein uL24 (102 aa).

It belongs to the universal ribosomal protein uL24 family. Part of the 50S ribosomal subunit.

Its function is as follows. One of two assembly initiator proteins, it binds directly to the 5'-end of the 23S rRNA, where it nucleates assembly of the 50S subunit. Functionally, one of the proteins that surrounds the polypeptide exit tunnel on the outside of the subunit. This Paraburkholderia xenovorans (strain LB400) protein is Large ribosomal subunit protein uL24.